The primary structure comprises 169 residues: NADH dehydrogenase [ubiquinone] 1 alpha subcomplex assembly factor 2 (169 aa).

Residues 116–169 (TSEELLPPPVQTQIKGHASAPYFGKEEPSVAPSSTGKTFQPGSWMPRDGKSHNQ) form a disordered region. A Phosphoserine modification is found at Ser134. The segment covering 146–156 (APSSTGKTFQP) has biased composition (polar residues).

It belongs to the complex I NDUFA12 subunit family. As to quaternary structure, interacts with ARMC9. In terms of tissue distribution, highly expressed in ESCC cells. Also expressed in heart, skeletal muscle, liver, and in fibroblasts.

The protein localises to the mitochondrion. Its function is as follows. Acts as a molecular chaperone for mitochondrial complex I assembly. Complex I functions in the transfer of electrons from NADH to the respiratory chain. The immediate electron acceptor for the enzyme is believed to be ubiquinone. Is involved in the initial steps of cilia formation, including removal of CP110 from the mother centrioles, docking of membrane vesicles to the mother centrioles, and establishment of the transition zone. In Homo sapiens (Human), this protein is NADH dehydrogenase [ubiquinone] 1 alpha subcomplex assembly factor 2 (NDUFAF2).